A 420-amino-acid polypeptide reads, in one-letter code: Gamma-glutamyl phosphate reductase (420 aa).

Belongs to the gamma-glutamyl phosphate reductase family.

It is found in the cytoplasm. The catalysed reaction is L-glutamate 5-semialdehyde + phosphate + NADP(+) = L-glutamyl 5-phosphate + NADPH + H(+). The protein operates within amino-acid biosynthesis; L-proline biosynthesis; L-glutamate 5-semialdehyde from L-glutamate: step 2/2. Functionally, catalyzes the NADPH-dependent reduction of L-glutamate 5-phosphate into L-glutamate 5-semialdehyde and phosphate. The product spontaneously undergoes cyclization to form 1-pyrroline-5-carboxylate. The sequence is that of Gamma-glutamyl phosphate reductase from Oenococcus oeni (strain ATCC BAA-331 / PSU-1).